The sequence spans 97 residues: Small ribosomal subunit protein bS21 (97 aa).

The interval 37–97 is disordered; it reads EKPSVRKARE…APASSPTTTA (61 aa). The segment covering 76-97 has biased composition (low complexity); sequence RAVAPRRPAAAPAPASSPTTTA.

Belongs to the bacterial ribosomal protein bS21 family.

In Methylobacterium sp. (strain 4-46), this protein is Small ribosomal subunit protein bS21.